A 139-amino-acid chain; its full sequence is uncharacterized protein (139 aa).

One can recognise a Globin domain in the interval 1–133; it reads MLSEETIRVI…LAKTLITLEK (133 aa).

The protein belongs to the globin family.

This is an uncharacterized protein from Aquifex aeolicus (strain VF5).